The chain runs to 378 residues: Ribosomal RNA large subunit methyltransferase G (378 aa).

It belongs to the methyltransferase superfamily. RlmG family.

It localises to the cytoplasm. It catalyses the reaction guanosine(1835) in 23S rRNA + S-adenosyl-L-methionine = N(2)-methylguanosine(1835) in 23S rRNA + S-adenosyl-L-homocysteine + H(+). Specifically methylates the guanine in position 1835 (m2G1835) of 23S rRNA. This is Ribosomal RNA large subunit methyltransferase G from Shewanella baltica (strain OS195).